We begin with the raw amino-acid sequence, 64 residues long: uncharacterized protein (64 aa).

A helical transmembrane segment spans residues 30–52 (FYAIFEMLFWPLVSLISVGLLGE).

It is found in the membrane. This is an uncharacterized protein from Archaeoglobus fulgidus (strain ATCC 49558 / DSM 4304 / JCM 9628 / NBRC 100126 / VC-16).